Reading from the N-terminus, the 557-residue chain is Aspartate--tRNA ligase (557 aa).

Glu168 contacts L-aspartate. The tract at residues 192 to 195 (QIYK) is aspartate. Arg214 is a binding site for L-aspartate. Residues 214 to 216 (RDE) and Gln223 contribute to the ATP site. His423 serves as a coordination point for L-aspartate. Residue Glu457 coordinates ATP. Arg464 lines the L-aspartate pocket. 505–508 (GLDR) lines the ATP pocket.

Belongs to the class-II aminoacyl-tRNA synthetase family. Type 1 subfamily. Homodimer.

The protein localises to the cytoplasm. The catalysed reaction is tRNA(Asp) + L-aspartate + ATP = L-aspartyl-tRNA(Asp) + AMP + diphosphate. Catalyzes the attachment of L-aspartate to tRNA(Asp) in a two-step reaction: L-aspartate is first activated by ATP to form Asp-AMP and then transferred to the acceptor end of tRNA(Asp). The polypeptide is Aspartate--tRNA ligase (Mycoplasma pneumoniae (strain ATCC 29342 / M129 / Subtype 1) (Mycoplasmoides pneumoniae)).